Here is an 82-residue protein sequence, read N- to C-terminus: Envelope small membrane protein (82 aa).

Over 1–16 the chain is Virion surface; it reads MLPFVQEQIGAFIVNF. A helical transmembrane segment spans residues 17–37; that stretch reads FILSVVCAVTLVVCLAILTAI. Over 38 to 78 the chain is Intravirion; the sequence is RLCVQCVSGCHTLVFLPAVHIYNTGRAAYVKFQESHPPYPP.

It belongs to the betacoronaviruses E protein family. In terms of assembly, homopentamer. Interacts with membrane protein M in the budding compartment of the host cell, which is located between endoplasmic reticulum and the Golgi complex. Interacts with Nucleoprotein.

It localises to the host Golgi apparatus membrane. Plays a central role in virus morphogenesis and assembly. Acts as a viroporin and self-assembles in host membranes forming pentameric protein-lipid pores that allow ion transport. Also plays a role in the induction of apoptosis. In Pipistrellus abramus (Japanese pipistrelle), this protein is Envelope small membrane protein.